The chain runs to 379 residues: Succinyl-diaminopimelate desuccinylase (379 aa).

A Zn(2+)-binding site is contributed by His-68. The active site involves Asp-70. Asp-101 is a Zn(2+) binding site. The active-site Proton acceptor is Glu-135. Zn(2+) contacts are provided by Glu-136, Glu-164, and His-350.

It belongs to the peptidase M20A family. DapE subfamily. In terms of assembly, homodimer. The cofactor is Zn(2+). It depends on Co(2+) as a cofactor.

The catalysed reaction is N-succinyl-(2S,6S)-2,6-diaminopimelate + H2O = (2S,6S)-2,6-diaminopimelate + succinate. The protein operates within amino-acid biosynthesis; L-lysine biosynthesis via DAP pathway; LL-2,6-diaminopimelate from (S)-tetrahydrodipicolinate (succinylase route): step 3/3. Functionally, catalyzes the hydrolysis of N-succinyl-L,L-diaminopimelic acid (SDAP), forming succinate and LL-2,6-diaminopimelate (DAP), an intermediate involved in the bacterial biosynthesis of lysine and meso-diaminopimelic acid, an essential component of bacterial cell walls. The chain is Succinyl-diaminopimelate desuccinylase from Bordetella pertussis (strain Tohama I / ATCC BAA-589 / NCTC 13251).